The chain runs to 217 residues: MRLRNKPWAKDKIAAYPQYVIPDPETKRGRWRELFGHDQPLHVEIGTGKGKFITEMAKLHPDVNFIGIELYPSVLVSALDKLIESGLANVKLLNANAKDLTAFFADGEVSRIYLNFSDPWPKKRHEKRRLTYRDFLALYDRILAEDGDIHLKTDNQSFFEYSLVSLSQYGFVLASVQLDLHQSGMTDNVMTEYEEKFSAKGNRIYRCEAVRPPRRSS.

The S-adenosyl-L-methionine site is built by Glu44, Glu69, Asn96, and Asp118. Asp118 is an active-site residue. Position 122 (Lys122) interacts with substrate. The tract at residues 124-129 (RHEKRR) is interaction with RNA. Residues Asp154 and 191-194 (TEYE) each bind substrate.

Belongs to the class I-like SAM-binding methyltransferase superfamily. TrmB family.

It catalyses the reaction guanosine(46) in tRNA + S-adenosyl-L-methionine = N(7)-methylguanosine(46) in tRNA + S-adenosyl-L-homocysteine. The protein operates within tRNA modification; N(7)-methylguanine-tRNA biosynthesis. Its function is as follows. Catalyzes the formation of N(7)-methylguanine at position 46 (m7G46) in tRNA. In Geobacillus kaustophilus (strain HTA426), this protein is tRNA (guanine-N(7)-)-methyltransferase.